The following is a 413-amino-acid chain: MQKRVVVLLLDSFGIGASEDAKDFGDFGANTLGNIAKACFNNLANSNDRNGALKLPYLESLGLGLSALKATNELPLGFESKPNLIGAYAYAKELSSAKDTISGHWEMMGAPVLFEWGYFKDKTHSFPKEILDEIMHKTKIKGYLGNCHASGTEIIKDLGEKHLETLYPIFYTSADSVFQIAAHEEKFGLDNLYALCEEVFQILEPLKIARVIARPFIGANREDFKRTAKRKDYAIKPHKKLLFEKFIEEKQGEVISIGKIADIYAHVGITQKFKAGSLMELCDVTLDQVKNAKNNSLIFTNFVHFDSDYGHRRDISGYANALEYFDTRLKEVLENLKENDLLILCADHGCDPSFKGTDHTREYIPVLFYHKDLQPAFLGKSESFADIGQSIAYFLGLSPLDYGKNLLKFKGQP.

Mn(2+)-binding residues include aspartate 11, aspartate 306, histidine 311, aspartate 347, histidine 348, and histidine 359.

Belongs to the phosphopentomutase family. It depends on Mn(2+) as a cofactor.

It localises to the cytoplasm. The catalysed reaction is 2-deoxy-alpha-D-ribose 1-phosphate = 2-deoxy-D-ribose 5-phosphate. It catalyses the reaction alpha-D-ribose 1-phosphate = D-ribose 5-phosphate. It functions in the pathway carbohydrate degradation; 2-deoxy-D-ribose 1-phosphate degradation; D-glyceraldehyde 3-phosphate and acetaldehyde from 2-deoxy-alpha-D-ribose 1-phosphate: step 1/2. In terms of biological role, isomerase that catalyzes the conversion of deoxy-ribose 1-phosphate (dRib-1-P) and ribose 1-phosphate (Rib-1-P) to deoxy-ribose 5-phosphate (dRib-5-P) and ribose 5-phosphate (Rib-5-P), respectively. This is Phosphopentomutase from Helicobacter pylori (strain G27).